We begin with the raw amino-acid sequence, 324 residues long: Transmembrane protein 171 (324 aa).

4 helical membrane-spanning segments follow: residues I22–F42, M57–A77, L113–V133, and F160–V180. Residues P229–S239 are compositionally biased toward low complexity. Disordered stretches follow at residues P229–N248 and Y279–Y304. The segment covering Y279–S291 has biased composition (polar residues).

The protein resides in the membrane. The polypeptide is Transmembrane protein 171 (TMEM171) (Homo sapiens (Human)).